Here is a 65-residue protein sequence, read N- to C-terminus: Beta-mammal toxin Tma1 (65 aa).

Positions 2 to 64 constitute an LCN-type CS-alpha/beta domain; sequence KEGYLVGNDG…TWNSAKNRCG (63 aa). 4 cysteine pairs are disulfide-bonded: cysteine 12–cysteine 63, cysteine 16–cysteine 38, cysteine 24–cysteine 44, and cysteine 28–cysteine 46.

This sequence belongs to the long (4 C-C) scorpion toxin superfamily. Sodium channel inhibitor family. Expressed by the venom gland.

It localises to the secreted. In terms of biological role, beta toxins bind voltage-independently at site-4 of sodium channels (Nav) and shift the voltage of activation toward more negative potentials thereby affecting sodium channel activation and promoting spontaneous and repetitive firing. This toxin acts on human Nav1.4/SCN4A and Nav1.6/SCN8A voltage-gated sodium channels. This chain is Beta-mammal toxin Tma1, found in Tityus macrochirus (Scorpion).